The primary structure comprises 374 residues: MDSLDAFATGKLDALEAGSLRRKLVPTERGSGAAAARRGRALVSFSCNDYLGLSHHPRVIAAAQAAAASHGAGAGGSRLVTGDHPYLGALEDGLARHKGAEAALVFGSGYLANLGITPALAGRGDLVLLDELSHACMWAGARLSGAQVMTFRHNDPGDLAARLAEHRPHHGRALVLTERVFSMDGDRAPLGDILGIAESYDAWTLVDDAHGIGVVEDGPRAPLEMGTLSKALGSYGGYLCASRPVVDLMTSRARSFVYTTGLPPASAAAALEALAILEAEPERRARPLALARRFTARLGLPEAESAVVPVLVGEAQAALDISAALEAAGFLVVAIRPPTVPAGTARLRVAFSAAHDEAQVDALAEAVAALTGRA.

Positions 22 and 29 each coordinate substrate. 109–110 (GY) contacts pyridoxal 5'-phosphate. Residue His134 participates in substrate binding. Pyridoxal 5'-phosphate is bound by residues Ser182, 207 to 210 (DDAH), and 227 to 230 (TLSK). Lys230 bears the N6-(pyridoxal phosphate)lysine mark. Thr339 is a substrate binding site.

The protein belongs to the class-II pyridoxal-phosphate-dependent aminotransferase family. BioF subfamily. In terms of assembly, homodimer. Pyridoxal 5'-phosphate serves as cofactor.

The enzyme catalyses 6-carboxyhexanoyl-[ACP] + L-alanine + H(+) = (8S)-8-amino-7-oxononanoate + holo-[ACP] + CO2. It participates in cofactor biosynthesis; biotin biosynthesis. In terms of biological role, catalyzes the decarboxylative condensation of pimeloyl-[acyl-carrier protein] and L-alanine to produce 8-amino-7-oxononanoate (AON), [acyl-carrier protein], and carbon dioxide. In Methylobacterium radiotolerans (strain ATCC 27329 / DSM 1819 / JCM 2831 / NBRC 15690 / NCIMB 10815 / 0-1), this protein is 8-amino-7-oxononanoate synthase.